Reading from the N-terminus, the 185-residue chain is Ribose 1,5-bisphosphate phosphokinase PhnN (185 aa).

10-17 (GPSGSGKD) provides a ligand contact to ATP.

It belongs to the ribose 1,5-bisphosphokinase family.

The enzyme catalyses alpha-D-ribose 1,5-bisphosphate + ATP = 5-phospho-alpha-D-ribose 1-diphosphate + ADP. The protein operates within metabolic intermediate biosynthesis; 5-phospho-alpha-D-ribose 1-diphosphate biosynthesis; 5-phospho-alpha-D-ribose 1-diphosphate from D-ribose 5-phosphate (route II): step 3/3. In terms of biological role, catalyzes the phosphorylation of ribose 1,5-bisphosphate to 5-phospho-D-ribosyl alpha-1-diphosphate (PRPP). The chain is Ribose 1,5-bisphosphate phosphokinase PhnN from Shigella dysenteriae serotype 1 (strain Sd197).